A 698-amino-acid polypeptide reads, in one-letter code: Polyribonucleotide nucleotidyltransferase (698 aa).

Residues Asp490 and Asp496 each contribute to the Mg(2+) site. Residues 557–616 (PKVVTMTIKPDKIRDVIGPGGKKINEIIDETGVKLDIEQDGTIFIGAVDQAMINRAREII) form the KH domain. The S1 motif domain maps to 626 to 694 (GQTYQATVKR…KQGRVNASHR (69 aa)).

It belongs to the polyribonucleotide nucleotidyltransferase family. Mg(2+) serves as cofactor.

The protein localises to the cytoplasm. The catalysed reaction is RNA(n+1) + phosphate = RNA(n) + a ribonucleoside 5'-diphosphate. Involved in mRNA degradation. Catalyzes the phosphorolysis of single-stranded polyribonucleotides processively in the 3'- to 5'-direction. This Staphylococcus aureus (strain Mu3 / ATCC 700698) protein is Polyribonucleotide nucleotidyltransferase.